A 216-amino-acid chain; its full sequence is Endo-1,4-beta-xylanase 2 (216 aa).

The signal sequence occupies residues 1–27; it reads MVSFSSLFVAACAAVTAFALPNELEKR. Residues 28–216 form the GH11 domain; that stretch reads AITSNEQGTN…SSGSASITVS (189 aa). An N-linked (GlcNAc...) asparagine glycan is attached at Asn87. The active-site Nucleophile is Glu112. The Proton donor role is filled by Glu203.

It belongs to the glycosyl hydrolase 11 (cellulase G) family.

It localises to the secreted. The enzyme catalyses Endohydrolysis of (1-&gt;4)-beta-D-xylosidic linkages in xylans.. It participates in glycan degradation; xylan degradation. Functionally, endo-1,4-beta-xylanase involved in the hydrolysis of xylan, a major structural heterogeneous polysaccharide found in plant biomass representing the second most abundant polysaccharide in the biosphere, after cellulose. In Rhizopus oryzae (Mucormycosis agent), this protein is Endo-1,4-beta-xylanase 2 (xyn2).